Here is a 359-residue protein sequence, read N- to C-terminus: Putative plant UBX domain-containing protein 15 (359 aa).

The UBX domain occupies 277 to 357 (DRSVVCSISV…GIANSIISVT (81 aa)).

The polypeptide is Putative plant UBX domain-containing protein 15 (Arabidopsis thaliana (Mouse-ear cress)).